Reading from the N-terminus, the 607-residue chain is Arginine--tRNA ligase, cytoplasmic (607 aa).

N-acetylalanine is present on Ala-2. Ser-15 is modified (phosphoserine). Interaction with tRNA stretches follow at residues 59–60 and 106–111; these read EW and NGPFIQ. Residues 148–153, His-162, Tyr-347, Asp-351, and Gln-375 each bind L-arginine; that span reads EFSSPN. A 'HIGH' region motif is present at residues 151–162; the sequence is SPNIAKPFHAGH. An interaction with tRNA region spans residues 484-498; sequence DTGPYLQYAHSRLRS.

This sequence belongs to the class-I aminoacyl-tRNA synthetase family. Monomer.

It localises to the cytoplasm. Its subcellular location is the cytosol. It catalyses the reaction tRNA(Arg) + L-arginine + ATP = L-arginyl-tRNA(Arg) + AMP + diphosphate. In terms of biological role, forms part of a macromolecular complex that catalyzes the attachment of specific amino acids to cognate tRNAs during protein synthesis. The chain is Arginine--tRNA ligase, cytoplasmic from Saccharomyces cerevisiae (strain ATCC 204508 / S288c) (Baker's yeast).